Consider the following 793-residue polypeptide: Sucrose synthase (793 aa).

The segment at 259 to 738 is GT-B glycosyltransferase; sequence MILNIAIISP…AIKRVTEKYS (480 aa).

The protein belongs to the glycosyltransferase 1 family. Homotetramer.

The enzyme catalyses an NDP-alpha-D-glucose + D-fructose = a ribonucleoside 5'-diphosphate + sucrose + H(+). Its function is as follows. Catalyzes the reversible conversion of sucrose and a nucleotide disphosphate (NDP) into fructose and NDP-glucose; although the reaction is freely reversible in vitro, the physiological reaction seems to be sucrose cleavage. Unlike characterized plant enzymes prefers ADP as a cosubstrate, whereas plants prefer UDP. Its preference for ADP over UDP suggests it may directly link sucrose and glycogen metabolism. The chain is Sucrose synthase from Melioribacter roseus (strain JCM 17771 / P3M-2).